Reading from the N-terminus, the 531-residue chain is Peptide chain release factor 3 (531 aa).

The tr-type G domain maps to 11–280 (GRRRTFAIIS…AFIRFASRPG (270 aa)). GTP contacts are provided by residues 20 to 27 (SHPDAGKT), 88 to 92 (DTPGH), and 142 to 145 (NKLD).

This sequence belongs to the TRAFAC class translation factor GTPase superfamily. Classic translation factor GTPase family. PrfC subfamily.

It localises to the cytoplasm. Increases the formation of ribosomal termination complexes and stimulates activities of RF-1 and RF-2. It binds guanine nucleotides and has strong preference for UGA stop codons. It may interact directly with the ribosome. The stimulation of RF-1 and RF-2 is significantly reduced by GTP and GDP, but not by GMP. This is Peptide chain release factor 3 from Gloeobacter violaceus (strain ATCC 29082 / PCC 7421).